The sequence spans 142 residues: Maximins y/Hv type 1 (142 aa).

A signal peptide spans 1 to 18 (MNFKYIVAVSFLIASGYA). The propeptide occupies 19-43 (RSEENDVQSLSQREVLEEESLREIR). A Phenylalanine amide modification is found at phenylalanine 68. The propeptide occupies 72–121 (TAEDHEVMKRLEAVMRDLDSLDHPEEASERETRGFNQEEIANLFTKKEKR). Isoleucine 141 is modified (isoleucine amide).

This sequence belongs to the bombinin family. As to expression, expressed by the skin glands.

It localises to the secreted. Maximin-y shows antimicrobial activity against bacteria and against the fungus C.albicans. It has little hemolytic activity. In terms of biological role, maximin-Hv shows antimicrobial activity against bacteria and against the fungus C.albicans. Shows strong hemolytic activity. In Bombina maxima (Giant fire-bellied toad), this protein is Maximins y/Hv type 1.